Reading from the N-terminus, the 85-residue chain is Large ribosomal subunit protein bL27 (85 aa).

The interval 1 to 21 (MAHKKGGGSTHNGRDSKPKML) is disordered.

It belongs to the bacterial ribosomal protein bL27 family.

In Albidiferax ferrireducens (strain ATCC BAA-621 / DSM 15236 / T118) (Rhodoferax ferrireducens), this protein is Large ribosomal subunit protein bL27.